Consider the following 119-residue polypeptide: Ribonuclease P protein component (119 aa).

The protein belongs to the RnpA family. As to quaternary structure, consists of a catalytic RNA component (M1 or rnpB) and a protein subunit.

It catalyses the reaction Endonucleolytic cleavage of RNA, removing 5'-extranucleotides from tRNA precursor.. RNaseP catalyzes the removal of the 5'-leader sequence from pre-tRNA to produce the mature 5'-terminus. It can also cleave other RNA substrates such as 4.5S RNA. The protein component plays an auxiliary but essential role in vivo by binding to the 5'-leader sequence and broadening the substrate specificity of the ribozyme. In Listeria monocytogenes serotype 4a (strain HCC23), this protein is Ribonuclease P protein component.